A 988-amino-acid polypeptide reads, in one-letter code: MDQGRQVFSVDLLERYATKNRGMITCMAAGNDVIVLGTSKGWIIRYDFGVGSSNDIDLAVGRTGEQSIHKVFVDPGGSHCIATVTGVGGAETFYTHAKWLKPRVLSRLKGLLVNAVAWNRQQITEVSTKEIILGTQDGQLFEMAVDEKDKREKYIKFLFELEELPEAFKALQMETANISSGMRYYVMAVTPTRLYSFTGIGTLESVFASYKERAVHFMELPGEIPNSELHFFIKQRRAVHFAWLSGTGIYHGGLNFGAQHSYPNGDENFVENKALLDYSKLSDGTEAVKPGSMALSEYHFLLLIGNKVKVVNRISEQIIEELQFDITSDSVSRGIIGLCSDASANVFYAYDQNSIFQVSVIDEGRDMWKVYLDLKVYAAALANCRDPLQRDQVYLVQAESAFTDKEYLRAASFYAKINYVISFEEVTLKFISINEPEALRTFLLHKLDNLSKDDKCQITMISTWATELYLDKINRLLLEDDTAIENRDSEYHSVIQEFRAFMSDCKDELDEATTVKILESYGRVEELVYFANLKEQYEIVVLHYIQQGEAKKALEVLQKSSVSVELQYQFAPELIMLDAYETVESWMANKNLNPRRLITAMMRYSSGPHAKNETHEVIKYLEFCVHRLHNEDPGIHSLLLSLYAKQEDDGALLRFLQCKFGKGRENGPEFFYDPKYALRLCLKERRTRACVHIYSMMSMHEEAVALALQIDPELAMAEADKVEDDEDLRKKLWLMVAKHVVKQEKGAKRENIRKAIAFLKETDGLLKIEDILPFFPDFALIDDFKEAICSSLEDYNKQIEQLKEEMNDATRGADNIRNDISALTQRYAVIDRDEECGVCKRKILMMSGDFRMAQGYSSAGPLAPFYVFPCGHSFHAQCLITHVTSCAHEEQAEHILDLQKQLTLLGSETRRDINGNRSDEPITSTTTADKLRSELDDAIASECPFCGELMINEITLPFIKPEDSQYSTSWDLRSETNLANQRTISLPV.

The stretch at 589-749 is one CHCR repeat; the sequence is NKNLNPRRLI…VVKQEKGAKR (161 aa). The stretch at 785-819 forms a coiled coil; that stretch reads KEAICSSLEDYNKQIEQLKEEMNDATRGADNIRND. Residues 836 to 886 form an RING-type; degenerate zinc finger; the sequence is CGVCKRKILMMSGDFRMAQGYSSAGPLAPFYVFPCGHSFHAQCLITHVTSC.

The protein belongs to the VPS18 family. As to quaternary structure, core component of at least two putative endosomal tethering complexes, the homotypic fusion and vacuole protein sorting (HOPS) complex and the class C core vacuole/endosome tethering (CORVET) complex. Their common core is composed of the class C Vps proteins VPS11, VCL1, VPS18 and VPS33, which in HOPS further associates with VPS39 and VPS41 and in CORVET with VPS3.

The protein localises to the endosome membrane. It localises to the vacuole membrane. It is found in the cytoplasm. In terms of biological role, essential protein required during embryogenesis. Believed to act as a core component of the putative HOPS endosomal tethering complex and of the class C core vacuole/endosome tethering (CORVET) complex. CORVET is required for vacuolar transport of SYP22. HOPS is required for the central vacuole formation. Involved in root development. Plays a role in vesicle-mediated protein trafficking to lysosomal compartments including the endocytic membrane transport pathways. This is Vacuolar sorting protein 18 from Arabidopsis thaliana (Mouse-ear cress).